Consider the following 648-residue polypeptide: EF-hand domain-containing protein 1 (648 aa).

A required for its localization in the mitotic spindle and interaction with alpha-tubulin region spans residues 1–45; that stretch reads MGTNPVHGLPFLPGSSFTDSTKTAFHRSQTLNYRNGYAVVRRPTM. DM10 domains are found at residues 93-198, 239-359, and 416-520; these read DKKV…ESQG, DKQV…KDKF, and DNKV…ESNA. Residues 582 to 617 form the EF-hand domain; that stretch reads SYKENLRETFQMYDKDESGYVDRETFFKICETLNVP.

Microtubule inner protein component of sperm flagellar doublet microtubules. Interacts with the C-terminus of CACNA1E. Interacts with alpha-tubulin. In terms of tissue distribution, expressed in adult brain including hippocampus, cerebellum, cerebral cortex, thalamus, hypothalamus, amygdala and upper brainstem. Expressed in soma and dentrites of pyramidal neurons of the hippocampal CA1 region, pyramidal neurons of the cerebral cortex and Purkinje cells of cerebellum. Highly expressed in testis, trachea, and oviduct, moderately in lung, and slightly in brain. Highly expressed in sperm flagella and tracheal cilia (at protein level).

The protein resides in the cytoplasm. The protein localises to the cytoskeleton. Its subcellular location is the cilium axoneme. It is found in the flagellum axoneme. It localises to the microtubule organizing center. The protein resides in the centrosome. The protein localises to the spindle. Its subcellular location is the spindle pole. Microtubule inner protein (MIP) part of the dynein-decorated doublet microtubules (DMTs) in cilia axoneme, which is required for motile cilia beating. Microtubule-associated protein which regulates cell division and neuronal migration during cortical development. Necessary for radial and tangential cell migration during brain development, possibly acting as a regulator of cell morphology and process formation during migration. May enhance calcium influx through CACNA1E and stimulate programmed cell death. Overexpression of EFHC1 in hippocampal primary culture neurons induced apoptosis. This chain is EF-hand domain-containing protein 1 (Efhc1), found in Mus musculus (Mouse).